Here is a 92-residue protein sequence, read N- to C-terminus: Small ribosomal subunit protein uS19 (92 aa).

It belongs to the universal ribosomal protein uS19 family.

Functionally, protein S19 forms a complex with S13 that binds strongly to the 16S ribosomal RNA. The sequence is that of Small ribosomal subunit protein uS19 from Streptococcus thermophilus (strain ATCC BAA-491 / LMD-9).